An 828-amino-acid polypeptide reads, in one-letter code: Glycerol-3-phosphate acyltransferase (828 aa).

The HXXXXD motif motif lies at 309 to 314 (CHRSHI).

Belongs to the GPAT/DAPAT family.

Its subcellular location is the cell inner membrane. The catalysed reaction is sn-glycerol 3-phosphate + an acyl-CoA = a 1-acyl-sn-glycero-3-phosphate + CoA. It functions in the pathway phospholipid metabolism; CDP-diacylglycerol biosynthesis; CDP-diacylglycerol from sn-glycerol 3-phosphate: step 1/3. The chain is Glycerol-3-phosphate acyltransferase from Pseudomonas putida (strain W619).